Reading from the N-terminus, the 272-residue chain is Imidazole glycerol phosphate synthase subunit HisF (272 aa).

Active-site residues include Asp11 and Asp130.

This sequence belongs to the HisA/HisF family. Heterodimer of HisH and HisF.

Its subcellular location is the cytoplasm. The catalysed reaction is 5-[(5-phospho-1-deoxy-D-ribulos-1-ylimino)methylamino]-1-(5-phospho-beta-D-ribosyl)imidazole-4-carboxamide + L-glutamine = D-erythro-1-(imidazol-4-yl)glycerol 3-phosphate + 5-amino-1-(5-phospho-beta-D-ribosyl)imidazole-4-carboxamide + L-glutamate + H(+). It participates in amino-acid biosynthesis; L-histidine biosynthesis; L-histidine from 5-phospho-alpha-D-ribose 1-diphosphate: step 5/9. Its function is as follows. IGPS catalyzes the conversion of PRFAR and glutamine to IGP, AICAR and glutamate. The HisF subunit catalyzes the cyclization activity that produces IGP and AICAR from PRFAR using the ammonia provided by the HisH subunit. This is Imidazole glycerol phosphate synthase subunit HisF from Methanococcus maripaludis (strain DSM 14266 / JCM 13030 / NBRC 101832 / S2 / LL).